A 424-amino-acid polypeptide reads, in one-letter code: Serine--tRNA ligase (424 aa).

230-232 (TAE) serves as a coordination point for L-serine. Residue 261–263 (RSE) coordinates ATP. Glu-284 serves as a coordination point for L-serine. Residue 348–351 (EISS) coordinates ATP. Position 384 (Ser-384) interacts with L-serine.

It belongs to the class-II aminoacyl-tRNA synthetase family. Type-1 seryl-tRNA synthetase subfamily. Homodimer. The tRNA molecule binds across the dimer.

Its subcellular location is the cytoplasm. It catalyses the reaction tRNA(Ser) + L-serine + ATP = L-seryl-tRNA(Ser) + AMP + diphosphate + H(+). The catalysed reaction is tRNA(Sec) + L-serine + ATP = L-seryl-tRNA(Sec) + AMP + diphosphate + H(+). It functions in the pathway aminoacyl-tRNA biosynthesis; selenocysteinyl-tRNA(Sec) biosynthesis; L-seryl-tRNA(Sec) from L-serine and tRNA(Sec): step 1/1. Functionally, catalyzes the attachment of serine to tRNA(Ser). Is also able to aminoacylate tRNA(Sec) with serine, to form the misacylated tRNA L-seryl-tRNA(Sec), which will be further converted into selenocysteinyl-tRNA(Sec). The protein is Serine--tRNA ligase of Streptococcus pneumoniae serotype 19F (strain G54).